Reading from the N-terminus, the 262-residue chain is Tethering factor for nuclear proteasome cut8 (262 aa).

The protein belongs to the cut8/STS1 family. As to quaternary structure, binds the proteasome. Post-translationally, the N-terminal part (residues 1 to 72) is polyubiquitinated by rhp6, which is required for the interaction with the proteasome.

The protein resides in the nucleus envelope. Together with nucleoporin alm1, tethers the proteasome to the nuclear envelope. Involved in ubiquitin-mediated protein degradation and facilitates the degradation of nuclear proteins like mitotic cyclin and cut2. Required for normal progression of anaphase. This is Tethering factor for nuclear proteasome cut8 from Schizosaccharomyces pombe (strain 972 / ATCC 24843) (Fission yeast).